Consider the following 87-residue polypeptide: MSVKEESFEKALARLERIAVALEAGDVPLEKGVALYKEGMGLVASCRKRLEAARLEISLAGEDGAVVPFDVADDEAARDGGPAGEES.

The protein belongs to the XseB family. As to quaternary structure, heterooligomer composed of large and small subunits.

The protein resides in the cytoplasm. The enzyme catalyses Exonucleolytic cleavage in either 5'- to 3'- or 3'- to 5'-direction to yield nucleoside 5'-phosphates.. Functionally, bidirectionally degrades single-stranded DNA into large acid-insoluble oligonucleotides, which are then degraded further into small acid-soluble oligonucleotides. In Solidesulfovibrio magneticus (strain ATCC 700980 / DSM 13731 / RS-1) (Desulfovibrio magneticus), this protein is Exodeoxyribonuclease 7 small subunit.